Reading from the N-terminus, the 86-residue chain is Gas vesicle protein A1 (86 aa).

Belongs to the gas vesicle GvpA family. The gas vesicle shell is 2 nm thick and consists of a single layer of this protein. It forms helical ribs nearly perpendicular to the long axis of the vesicle.

The protein localises to the gas vesicle shell. Gas vesicles are hollow, gas filled proteinaceous nanostructures found in some microorganisms. During planktonic growth they allow positioning of the organism at a favorable depth for light or nutrient acquisition. GvpA forms the protein shell. In terms of biological role, it is not clear if the 2 type A proteins in this organism are functionally redundant. Its function is as follows. When the full gvp locus (gvpA1-gvpP-gvpQ-gvpA2-gvpR-gvpN-gvpF-gvpG-gvpL-gvpS-gvpK-gvpJ-gvpT-gvpU, called pNL26) is expressed in E.coli gas vesicles are made. In Priestia megaterium (Bacillus megaterium), this protein is Gas vesicle protein A1.